A 128-amino-acid polypeptide reads, in one-letter code: Holo-[acyl-carrier-protein] synthase (128 aa).

The Mg(2+) site is built by Asp8 and Glu58.

It belongs to the P-Pant transferase superfamily. AcpS family. It depends on Mg(2+) as a cofactor.

It is found in the cytoplasm. The enzyme catalyses apo-[ACP] + CoA = holo-[ACP] + adenosine 3',5'-bisphosphate + H(+). Transfers the 4'-phosphopantetheine moiety from coenzyme A to a Ser of acyl-carrier-protein. This is Holo-[acyl-carrier-protein] synthase from Alkalilimnicola ehrlichii (strain ATCC BAA-1101 / DSM 17681 / MLHE-1).